Reading from the N-terminus, the 175-residue chain is Cell division protein SepF (175 aa).

Positions 20-29 (RYEDYDDYDD) are enriched in acidic residues. Residues 20-88 (RYEDYDDYDD…ERPTPPLRVT (69 aa)) form a disordered region. Composition is skewed to basic and acidic residues over residues 30–47 (AEPHRREPREAVERDLGS) and 54–73 (RRMDARESSPADPAELRRVS).

This sequence belongs to the SepF family. Homodimer. Interacts with FtsZ.

It localises to the cytoplasm. In terms of biological role, cell division protein that is part of the divisome complex and is recruited early to the Z-ring. Probably stimulates Z-ring formation, perhaps through the cross-linking of FtsZ protofilaments. Its function overlaps with FtsA. The sequence is that of Cell division protein SepF from Acidothermus cellulolyticus (strain ATCC 43068 / DSM 8971 / 11B).